Consider the following 1224-residue polypeptide: A disintegrin and metalloproteinase with thrombospondin motifs 16 (1224 aa).

The signal sequence occupies residues 1–24; the sequence is MKPRARGWRGLAALWMLLAQVAEQ. A propeptide spanning residues 25-279 is cleaved from the precursor; the sequence is APACAMGPAA…EYKSCLRHKR (255 aa). Residues 31–53 form a disordered region; it reads GPAAAAPGSPSVPRPPPPAERPG. Residues 40 to 50 show a composition bias toward pro residues; sequence PSVPRPPPPAE. An N-linked (GlcNAc...) asparagine glycan is attached at asparagine 156. Positions 247–254 match the Cysteine switch motif; that stretch reads HFCGRRKK. Cysteine 249 serves as a coordination point for Zn(2+). The 206-residue stretch at 290-495 folds into the Peptidase M12B domain; sequence LNVETLVVVD…AQAICLADQP (206 aa). The N-linked (GlcNAc...) asparagine glycan is linked to asparagine 310. Intrachain disulfides connect cysteine 366–cysteine 417, cysteine 392–cysteine 399, cysteine 411–cysteine 490, cysteine 450–cysteine 474, cysteine 518–cysteine 543, cysteine 529–cysteine 550, cysteine 538–cysteine 569, cysteine 563–cysteine 574, cysteine 598–cysteine 635, cysteine 602–cysteine 640, and cysteine 613–cysteine 625. Histidine 433 lines the Zn(2+) pocket. Glutamate 434 is an active-site residue. Positions 437 and 443 each coordinate Zn(2+). The Disintegrin domain maps to 496-585; the sequence is KPVKEYKYPE…KYGDEGPKPT (90 aa). One can recognise a TSP type-1 1 domain in the interval 586-641; sequence HGHWSDWSSWSPCSRTCGGGVSHRSRLCTNPKPSHGGKFCEGSTRTLKLCNSQKCP. N-linked (GlcNAc...) asparagine glycosylation is found at asparagine 741, asparagine 780, asparagine 835, asparagine 905, and asparagine 935. Positions 747–873 are spacer; it reads IHRGLYTKHH…KQPPAQPSYT (127 aa). 5 TSP type-1 domains span residues 874–922, 927–987, 988–1048, 1051–1115, and 1127–1181; these read WAIV…LVPC, CPPS…QSCP, PAWS…QRCH, KKLQ…LPCP, and RGSW…HFCP. Cystine bridges form between cysteine 939–cysteine 981, cysteine 943–cysteine 986, and cysteine 954–cysteine 970. The PLAC domain maps to 1186–1223; the sequence is KDAFCKDYFHWCYLVPQHGMCSHKFYGKQCCKTCSKSN.

It depends on Zn(2+) as a cofactor. Post-translationally, the precursor is cleaved by a furin endopeptidase. In terms of processing, glycosylated. Can be O-fucosylated by POFUT2 on a serine or a threonine residue found within the consensus sequence C1-X(2)-(S/T)-C2-G of the TSP type-1 repeat domains where C1 and C2 are the first and second cysteine residue of the repeat, respectively. Fucosylated repeats can then be further glycosylated by the addition of a beta-1,3-glucose residue by the glucosyltransferase, B3GALTL. Fucosylation mediates the efficient secretion of ADAMTS family members. Can also be C-glycosylated with one or two mannose molecules on tryptophan residues within the consensus sequence W-X-X-W of the TPRs, and N-glycosylated. These other glycosylations can also facilitate secretion. As to expression, expressed in fetal lung and kidney and in adult prostate and ovary.

The protein localises to the secreted. It is found in the extracellular space. The protein resides in the extracellular matrix. This Homo sapiens (Human) protein is A disintegrin and metalloproteinase with thrombospondin motifs 16 (ADAMTS16).